The chain runs to 138 residues: Small ribosomal subunit protein uS9 (138 aa).

It belongs to the universal ribosomal protein uS9 family.

The chain is Small ribosomal subunit protein uS9 (rps9) from Sulfolobus acidocaldarius (strain ATCC 33909 / DSM 639 / JCM 8929 / NBRC 15157 / NCIMB 11770).